The chain runs to 339 residues: MIRIRNRWFRWLAIALASLVASIGIATVGFAATGVTPDQVLSAIEGTFGVNVGQRRNHIKGTCAVGNFVATTEAKTYSRSPLFSGQSIPVVARFSLAGGNPKAPDTAKNPRGLGLQFQLPNNRFLNMALLNTPVFGVASPEGFYENILAIRPDPTTGKPDPEKVKAFREKYPENKAQAAFLASNNPPTSYANTSYFGLHAFKFINQTNQTRLVRWQFVPQDGEKRLTDAELQAAPANFLEQKLIERTQDSPVKWDFWITLGQPGDAEDNPTIAWPSDRQQVKVGTLTLTAASPQPGAACEGINYDPLVLSDGIEPTNDPVLQFRSGVYALSYSKRTRGL.

Residues 1–31 (MIRIRNRWFRWLAIALASLVASIGIATVGFA) form the signal peptide. The active site involves His58. Residue Tyr328 participates in heme binding.

The protein belongs to the catalase family. Heme serves as cofactor.

It is found in the periplasm. Its function is as follows. Has an organic peroxide-dependent peroxidase activity. This Synechococcus elongatus (strain ATCC 33912 / PCC 7942 / FACHB-805) (Anacystis nidulans R2) protein is Catalase-related peroxidase (srpA).